Consider the following 314-residue polypeptide: Transcription factor DICHOTOMA (314 aa).

In terms of domain architecture, TCP spans 87–145 (KKDRHSKINRPQGPRDRRVRLSIGIARKFFDLQEMLGFDKPSKTLDWLLTKSKEAIKEL). In terms of domain architecture, R spans 201 to 218 (KESRAKARARARERTKEK).

It localises to the nucleus. Transcription regulator involved in the dorsovental asymmetry of flowers. Promotes dorsal identity. This is Transcription factor DICHOTOMA (DICH) from Antirrhinum majus (Garden snapdragon).